The following is a 380-amino-acid chain: Succinyl-diaminopimelate desuccinylase (380 aa).

His69 contacts Zn(2+). Asp71 is an active-site residue. Residue Asp102 participates in Zn(2+) binding. Catalysis depends on Glu135, which acts as the Proton acceptor. 3 residues coordinate Zn(2+): Glu136, Glu164, and His353.

It belongs to the peptidase M20A family. DapE subfamily. Homodimer. Zn(2+) serves as cofactor. Requires Co(2+) as cofactor.

The enzyme catalyses N-succinyl-(2S,6S)-2,6-diaminopimelate + H2O = (2S,6S)-2,6-diaminopimelate + succinate. It functions in the pathway amino-acid biosynthesis; L-lysine biosynthesis via DAP pathway; LL-2,6-diaminopimelate from (S)-tetrahydrodipicolinate (succinylase route): step 3/3. Its function is as follows. Catalyzes the hydrolysis of N-succinyl-L,L-diaminopimelic acid (SDAP), forming succinate and LL-2,6-diaminopimelate (DAP), an intermediate involved in the bacterial biosynthesis of lysine and meso-diaminopimelic acid, an essential component of bacterial cell walls. The polypeptide is Succinyl-diaminopimelate desuccinylase (Cereibacter sphaeroides (strain ATCC 17025 / ATH 2.4.3) (Rhodobacter sphaeroides)).